Here is a 927-residue protein sequence, read N- to C-terminus: BTB/POZ domain-containing protein KCTD19 (927 aa).

One can recognise a BTB 1 domain in the interval 18–72 (NVGGWHFSVPRSKLAQFPDSLLWKEASALTSSENQRLFIDRDGSTFRHVHYYLYT). Ser-270 is modified (phosphoserine). Positions 399 to 486 (IKLYVGSHWY…YHIPALSEAL (88 aa)) constitute a BTB 2 domain. A disordered region spans residues 664–760 (VEEASLHVPS…NANGTDNPGA (97 aa)). Residues 731–743 (DWGKQRPKDRESP) show a composition bias toward basic and acidic residues.

In terms of assembly, identified in a complex with ZNF541, HDAC1 and HSPA2. Identified in a complex with ZNF541 and HDAC1. Identified in a complex with HDAC1, HDAC2, DNTTIP1 and ZNF541. Detected in adult testis.

Its subcellular location is the nucleus. Transcription regulator which is essential for male fertility and for the completion of meiotic prophase in spermatocytes. Regulates progression of the pachytene stage of meiotic prophase and promotes the transcriptional activation activity ZNF541. Required for the organization of chromosomes during metaphase I. The sequence is that of BTB/POZ domain-containing protein KCTD19 (Kctd19) from Mus musculus (Mouse).